The primary structure comprises 277 residues: MGIKFTKMHGLGNDFIVLDGVNQSIQLTVEQIQKLANRHTGIGFDQCLLIESSQTEGIDFNYRIFNADGQEVGQCGNGARCIALFARYYGLTAKNKLTVATKTTLMDLIINEDNSVSVNMGVPRLAPGEIPLLADRQSPEYSLELNNGNTVNLHAISVGNPHAVLLVENIDTAPVNSLGQQISFHPQFPEQVNVGFMQIVNHEKINLRVYERGCGETIACGSGAVAAAAIARLFYNLSDKITVHLPGGDLCIQWPCPTAPIILTGPAAFVYEGTLLS.

Asparagine 13, glutamine 46, and asparagine 66 together coordinate substrate. Residue cysteine 75 is the Proton donor of the active site. Substrate-binding positions include 76–77 (GN), asparagine 160, asparagine 193, and 211–212 (ER). The active-site Proton acceptor is cysteine 220. Residue 221–222 (GS) coordinates substrate.

It belongs to the diaminopimelate epimerase family. In terms of assembly, homodimer.

It is found in the cytoplasm. The enzyme catalyses (2S,6S)-2,6-diaminopimelate = meso-2,6-diaminopimelate. Its pathway is amino-acid biosynthesis; L-lysine biosynthesis via DAP pathway; DL-2,6-diaminopimelate from LL-2,6-diaminopimelate: step 1/1. In terms of biological role, catalyzes the stereoinversion of LL-2,6-diaminopimelate (L,L-DAP) to meso-diaminopimelate (meso-DAP), a precursor of L-lysine and an essential component of the bacterial peptidoglycan. In Legionella pneumophila (strain Corby), this protein is Diaminopimelate epimerase.